A 70-amino-acid polypeptide reads, in one-letter code: UPF0270 protein VIBHAR_00073 (70 aa).

The protein belongs to the UPF0270 family.

The sequence is that of UPF0270 protein VIBHAR_00073 from Vibrio campbellii (strain ATCC BAA-1116).